Reading from the N-terminus, the 361-residue chain is UDP-3-O-acylglucosamine N-acyltransferase (361 aa).

Catalysis depends on H253, which acts as the Proton acceptor.

It belongs to the transferase hexapeptide repeat family. LpxD subfamily. As to quaternary structure, homotrimer.

It carries out the reaction a UDP-3-O-[(3R)-3-hydroxyacyl]-alpha-D-glucosamine + a (3R)-hydroxyacyl-[ACP] = a UDP-2-N,3-O-bis[(3R)-3-hydroxyacyl]-alpha-D-glucosamine + holo-[ACP] + H(+). Its pathway is bacterial outer membrane biogenesis; LPS lipid A biosynthesis. Its function is as follows. Catalyzes the N-acylation of UDP-3-O-acylglucosamine using 3-hydroxyacyl-ACP as the acyl donor. Is involved in the biosynthesis of lipid A, a phosphorylated glycolipid that anchors the lipopolysaccharide to the outer membrane of the cell. This Burkholderia pseudomallei (strain 668) protein is UDP-3-O-acylglucosamine N-acyltransferase.